We begin with the raw amino-acid sequence, 1024 residues long: NLR family CARD domain-containing protein 4 (1024 aa).

The region spanning 1-88 is the CARD domain; sequence MNFIKDNSRA…PLFQDLNGQS (88 aa). The tract at residues 95–298 is nucleotide-binding domain (NBD); the sequence is EGDLDDLAQD…QFGALTAEVG (204 aa). Residues 163 to 476 form the NACHT domain; sequence SPCIIEGESG…VTKGNGYLQK (314 aa). 169 to 176 contacts ATP; sequence GESGKGKS. Residues 356–463 are winged-helix domain (WHD); the sequence is SHTQTTLFHT…RLSSLLTSHE (108 aa). Ser-533 is modified (phosphoserine). LRR repeat units lie at residues 578–598, 656–679, 735–758, 762–785, 787–812, 824–847, 848–870, 878–902, 911–933, 936–963, 965–985, and 999–1021; these read FFQG…LFDF, KQEF…DIRY, VTNL…LTDS, LKNL…KLAE, LKNL…DYIV, EIQL…LHNL, VKLS…ALHE, LEQL…LLKH, KLGL…FFGK, LKNF…VFEN, KQLV…ALVR, and EARL…AFKL.

In terms of assembly, homooligomer; homooligomerizes to induce formation of the NLRC4 inflammasome. Homooligomerizes following activation by pathogenic proteins. Component of the NLRC4 inflammasome, at least composed of NLRC4 and caspase-1 (CASP1). Some NLRC4 inflammasomes contain PYCARD/ASC, while some others directly contact and activate CASP1. Interacts (via CARD domain) with PYCARD/ASC, pro-caspase-1 (CASP1), NOD2, BCL10 and NALP1 (NAC) by CARD-CARD interaction. Interacts with EIF2AK2/PKR. Phosphorylated at Ser-533 following infection of macrophages with S.typhimurium (Salmonella). Phosphorylation is essential for NLRC4 inflammasome function to promote caspase-1 activation and pyroptosis. PRKCD phosphorylates Ser-533 in vitro. As to expression, isoform 2 is expressed ubiquitously, although highly expressed in lung and spleen. Isoform 1 is highly expressed in lung, followed by leukocytes especially monocytes, lymph node, colon, brain, prostate, placenta, spleen, bone marrow and fetal liver. Isoform 4 is only detected in brain.

Its subcellular location is the cytoplasm. The protein resides in the cytosol. It localises to the inflammasome. In terms of biological role, key component of inflammasomes that indirectly senses specific proteins from pathogenic bacteria and fungi and responds by assembling an inflammasome complex that promotes caspase-1 activation, cytokine production and macrophage pyroptosis. The NLRC4 inflammasome is activated as part of the innate immune response to a range of intracellular bacteria. This chain is NLR family CARD domain-containing protein 4 (NLRC4), found in Homo sapiens (Human).